The primary structure comprises 189 residues: Photosystem I assembly protein Ycf4 (189 aa).

2 consecutive transmembrane segments (helical) span residues 25–45 and 62–82; these read SVYFWAVALTGGGLGFTLAGL and LVFIPQGIAMLFYGVLGSLAG.

It belongs to the Ycf4 family.

It localises to the cellular thylakoid membrane. In terms of biological role, seems to be required for the assembly of the photosystem I complex. This is Photosystem I assembly protein Ycf4 from Synechococcus sp. (strain JA-3-3Ab) (Cyanobacteria bacterium Yellowstone A-Prime).